A 366-amino-acid polypeptide reads, in one-letter code: MELSEIRAELENMASRLADFRGSLDLESKEARIAELDEQMADPEFWNDQQKAQTVINEANGLKDYVNSYKKLNESHEELQMTHDLLKEEPDTDLQLELEKELKSLTKEFNEFELQLLLSEPYDKNNAILELHPGAGGTESQDWGSMLLRMYTRWGERRGFKVETLDYLPGDEAGIKSVTLLIKGHNAYGYLKAEKGVHRLVRISPFDSSGRRHTSFVSCEVMPEFNDEIDIDIRTEDIKVDTYRASGAGGQHVNTTDSAVRITHLPTNVVVTCQTERSQIKNRERAMKMLKAKLYQRRIEEQQAELDEIRGEQKEIGWGSQIRSYVFHPYSMVKDHRTNTEMGNVQAVMDGDIDTFIDAYLRSKLS.

At glutamine 251 the chain carries N5-methylglutamine.

The protein belongs to the prokaryotic/mitochondrial release factor family. In terms of processing, methylated by PrmC. Methylation increases the termination efficiency of RF2.

Its subcellular location is the cytoplasm. Peptide chain release factor 2 directs the termination of translation in response to the peptide chain termination codons UGA and UAA. The polypeptide is Peptide chain release factor 2 (prfB) (Bacillus subtilis (strain 168)).